The primary structure comprises 519 residues: MSVSVLSPSRLLGDVSGILQAASLLILLLLLIKAVQLYLHRQWLLKALQQFPCPPSHWLFGHIQELQQDQELQRIQKWVETFPSACPHWLWGGKVRVQLYDPDYMKVILGRSDPKSHGSYRFLAPWIGYGLLLLNGQTWFQHRRMLTPAFHYDILKPYVGLMADSVRVMLDKWEELLGQDSPLEVFQHVSLMTLDTIMKCAFSHQGSIQVDRNSQSYIQAISDLNNLVFSRVRNAFHQNDTIYSLTSAGRWTHRACQLAHQHTDQVIQLRKAQLQKEGELEKIKRKRHLDFLDILLLAKMENGSILSDKDLRAEVDTFMFEGHDTTASGISWILYALATHPKHQERCREEIHSLLGDGASITWNHLDQMPYTTMCIKEALRLYPPVPGIGRELSTPVTFPDGRSLPKGIMVLLSIYGLHHNPKVWPNPEVFDPFRFAPGSAQHSHAFLPFSGGSRNCIGKQFAMNELKVATALTLLRFELLPDPTRIPIPIARLVLKSKNGIHLRLRRLPNPCEDKDQL.

Positions 1 to 4 (MSVS) are excised as a propeptide. Glutamate 321 serves as a coordination point for heme. Serine 440 bears the Phosphoserine mark. Position 457 (cysteine 457) interacts with heme.

The protein belongs to the cytochrome P450 family. Requires heme as cofactor. As to expression, expressed in liver. Expressed in S2 and S3 segments of proximal tubules in cortex and outer medulla of kidney.

It localises to the endoplasmic reticulum membrane. The protein resides in the microsome membrane. The catalysed reaction is an organic molecule + reduced [NADPH--hemoprotein reductase] + O2 = an alcohol + oxidized [NADPH--hemoprotein reductase] + H2O + H(+). It carries out the reaction an omega-methyl-long-chain fatty acid + reduced [NADPH--hemoprotein reductase] + O2 = an omega-hydroxy-long-chain fatty acid + oxidized [NADPH--hemoprotein reductase] + H2O + H(+). It catalyses the reaction dodecanoate + reduced [NADPH--hemoprotein reductase] + O2 = 12-hydroxydodecanoate + oxidized [NADPH--hemoprotein reductase] + H2O + H(+). The enzyme catalyses tetradecanoate + reduced [NADPH--hemoprotein reductase] + O2 = 14-hydroxytetradecanoate + oxidized [NADPH--hemoprotein reductase] + H2O + H(+). The catalysed reaction is hexadecanoate + reduced [NADPH--hemoprotein reductase] + O2 = 16-hydroxyhexadecanoate + oxidized [NADPH--hemoprotein reductase] + H2O + H(+). It carries out the reaction (9Z)-octadecenoate + reduced [NADPH--hemoprotein reductase] + O2 = 18-hydroxy-(9Z)-octadecenoate + oxidized [NADPH--hemoprotein reductase] + H2O + H(+). It catalyses the reaction (5Z,8Z,11Z,14Z)-eicosatetraenoate + reduced [NADPH--hemoprotein reductase] + O2 = 20-hydroxy-(5Z,8Z,11Z,14Z)-eicosatetraenoate + oxidized [NADPH--hemoprotein reductase] + H2O + H(+). The enzyme catalyses 22-hydroxydocosanoate + reduced [NADPH--hemoprotein reductase] + O2 = 22-oxodocosanoate + oxidized [NADPH--hemoprotein reductase] + 2 H2O + H(+). The catalysed reaction is 22-oxodocosanoate + reduced [NADPH--hemoprotein reductase] + O2 = docosanedioate + oxidized [NADPH--hemoprotein reductase] + H2O + 2 H(+). It carries out the reaction (9R,10S)-epoxy-octadecanoate + reduced [NADPH--hemoprotein reductase] + O2 = 18-hydroxy-(9R,10S)-epoxy-octadecanoate + oxidized [NADPH--hemoprotein reductase] + H2O + H(+). It catalyses the reaction 3-hydroxyhexadecanoate + reduced [NADPH--hemoprotein reductase] + O2 = 3,16-dihydroxyhexadecanoate + oxidized [NADPH--hemoprotein reductase] + H2O + H(+). Its pathway is lipid metabolism; arachidonate metabolism. It functions in the pathway lipid metabolism; oxylipin biosynthesis. With respect to regulation, activated by cytochrome b5. Its function is as follows. A cytochrome P450 monooxygenase involved in the metabolism of fatty acids and their oxygenated derivatives (oxylipins). Mechanistically, uses molecular oxygen inserting one oxygen atom into a substrate, and reducing the second into a water molecule, with two electrons provided by NADPH via cytochrome P450 reductase (CPR; NADPH-ferrihemoprotein reductase). Catalyzes predominantly the oxidation of the terminal carbon (omega-oxidation) of saturated and unsaturated fatty acids, the catalytic efficiency decreasing in the following order: dodecanoic &gt; tetradecanoic &gt; (9Z)-octadecenoic &gt; (9Z,12Z)-octadecadienoic &gt; hexadecanoic acid. Acts as a major omega-hydroxylase for dodecanoic (lauric) acid in liver. Participates in omega-hydroxylation of (5Z,8Z,11Z,14Z)-eicosatetraenoic acid (arachidonate) to 20-hydroxyeicosatetraenoic acid (20-HETE), a signaling molecule acting both as vasoconstrictive and natriuretic with overall effect on arterial blood pressure. Can also catalyze the oxidation of the penultimate carbon (omega-1 oxidation) of fatty acids with lower efficiency. May contribute to the degradation of saturated very long-chain fatty acids (VLCFAs) such as docosanoic acid, by catalyzing successive omega-oxidations to the corresponding dicarboxylic acid, thereby initiating chain shortening. Omega-hydroxylates (9R,10S)-epoxy-octadecanoate stereoisomer. Plays a minor role in omega-oxidation of long-chain 3-hydroxy fatty acids. Has little activity toward prostaglandins A1 and E1. This Homo sapiens (Human) protein is Cytochrome P450 4A11.